The primary structure comprises 181 residues: Protein Syd (181 aa).

This sequence belongs to the Syd family.

Its subcellular location is the cell inner membrane. Functionally, interacts with the SecY protein in vivo. May bind preferentially to an uncomplexed state of SecY, thus functioning either as a chelating agent for excess SecY in the cell or as a regulatory factor that negatively controls the translocase function. The sequence is that of Protein Syd from Escherichia coli O17:K52:H18 (strain UMN026 / ExPEC).